Consider the following 357-residue polypeptide: Alkanal monooxygenase alpha chain (357 aa).

This sequence belongs to the bacterial luciferase oxidoreductase family. In terms of assembly, heterodimer of an alpha and a beta chain.

The enzyme catalyses a long-chain fatty aldehyde + FMNH2 + O2 = a long-chain fatty acid + hnu + FMN + H2O + 2 H(+). Its function is as follows. Light-emitting reaction in luminous bacteria. The polypeptide is Alkanal monooxygenase alpha chain (luxA) (Kryptophanaron alfredi symbiont).